A 180-amino-acid chain; its full sequence is Nucleoid-associated protein At4g30620, chloroplastic (180 aa).

Residues 1–48 (MASTATNTDFFKTLLSPFSNGNAAQRSSRQNIVWLNRKQSGNNNRSLR) constitute a chloroplast transit peptide. The disordered stretch occupies residues 45–65 (RSLRVNGLFGGGKKDNKEDGQ). Residues 56–65 (GKKDNKEDGQ) show a composition bias toward basic and acidic residues.

The protein belongs to the YbaB/EbfC family. As to quaternary structure, homodimer. Binds to the translation initiation factors TIF3E1.

The protein resides in the plastid. It localises to the chloroplast. In terms of biological role, binds to DNA and alters its conformation. May be involved in regulation of gene expression, nucleoid organization and DNA protection. The sequence is that of Nucleoid-associated protein At4g30620, chloroplastic from Arabidopsis thaliana (Mouse-ear cress).